A 295-amino-acid chain; its full sequence is Ethanolamine ammonia-lyase small subunit (295 aa).

Positions 207, 228, and 258 each coordinate adenosylcob(III)alamin.

Belongs to the EutC family. In terms of assembly, the basic unit is a heterodimer which dimerizes to form tetramers. The heterotetramers trimerize; 6 large subunits form a core ring with 6 small subunits projecting outwards. Adenosylcob(III)alamin is required as a cofactor.

Its subcellular location is the bacterial microcompartment. The catalysed reaction is ethanolamine = acetaldehyde + NH4(+). It participates in amine and polyamine degradation; ethanolamine degradation. Functionally, catalyzes the deamination of various vicinal amino-alcohols to oxo compounds. Allows this organism to utilize ethanolamine as the sole source of nitrogen and carbon in the presence of external vitamin B12. In Escherichia coli (strain 55989 / EAEC), this protein is Ethanolamine ammonia-lyase small subunit.